The primary structure comprises 372 residues: Adaptive-response sensory-kinase SasA (372 aa).

A Histidine kinase domain is found at methionine 147 to glutamine 360. Histidine 150 carries the post-translational modification Phosphohistidine; by autocatalysis.

As to quaternary structure, homooligomerizes. Interacts with KaiC. Participates in the KaiBC complex, whose core is composed of a KaiC homohexamer and 6 KaiB.

The catalysed reaction is ATP + protein L-histidine = ADP + protein N-phospho-L-histidine.. In terms of biological role, member of the two-component regulatory system SasA/RpaA involved in genome-wide circadian gene expression. One of several clock output pathways. Participates in the Kai clock protein complex, the main circadian regulator in cyanobacteria, via its interaction with KaiC. KaiC enhances the autophosphorylation activity of SasA, which then transfers its phosphate group to RpaA to activate it. In addition to its output function, recruits fold-shifted KaiB (KaiB(fs)) to KaiC to cooperatively form the KaiB(6):KaiC(6) complex (independent of SasA kinase activity). Required for robustness of the circadian rhythm of gene expression and is involved in clock output, also required for adaptation to light/dark cycles. The sequence is that of Adaptive-response sensory-kinase SasA from Prochlorococcus marinus subsp. pastoris (strain CCMP1986 / NIES-2087 / MED4).